We begin with the raw amino-acid sequence, 1130 residues long: Sterol regulatory element-binding protein 2 (1130 aa).

A transcriptional activation (acidic) region spans residues 1–50 (MDESSELGVLETMETLTELGDELTLGDIDEMLQFVSNQVGEFPDLFSEQL). Residues 1–470 (MDESSELGVL…VALGMVDRSR (470 aa)) lie on the Cytoplasmic side of the membrane. The segment at 53–133 (SFPGGGSNGG…PQPQPQPPAQ (81 aa)) is disordered. The span at 55–64 (PGGGSNGGSG) shows a compositional bias: gly residues. Polar residues predominate over residues 83–93 (RSFSQVPLSTF). The span at 94–104 (SPSAASPQAPA) shows a compositional bias: low complexity. Over residues 111–131 (PTPPRATPVLQPRPQPQPQPP) the composition is skewed to pro residues. An interaction with LMNA region spans residues 226-480 (QQVPVLVQPQ…ILLCVLTFLG (255 aa)). In terms of domain architecture, bHLH spans 319 to 369 (ERRTTHNIIEKRYRSSINDKIIELKDLVMGTDAKMHKSGVLRKAIDYIKYL). Residues 369 to 390 (LQQVNHKLRQENMVLKLANQKN) form a leucine-zipper region. Lys453 is covalently cross-linked (Glycyl lysine isopeptide (Lys-Gly) (interchain with G-Cter in SUMO2)). The chain crosses the membrane as a helical span at residues 471–491 (ILLCVLTFLGLSFNPLTSLLQ). Over 492-522 (WGGAHNTDQHPYSGSGRSVLSLESGAGGWFD) the chain is Lumenal. Residues 523-543 (WMVPTLLLWLVNGVIVLSVFV) form a helical membrane-spanning segment. Residues 544 to 1130 (KLLVHGEPVI…LGGGTAIAAS (587 aa)) are Cytoplasmic-facing. Residue Ser1087 is modified to Phosphoserine.

This sequence belongs to the SREBP family. Forms a tight complex with SCAP, the SCAP-SREBP complex, in the endoplasmic reticulum membrane and the Golgi apparatus. Interacts with PAQR3; the interaction anchors the SCAP-SREBP complex to the Golgi apparatus in low cholesterol conditions. Interacts (via C-terminal domain) with RNF139. In terms of assembly, homodimer; efficient DNA binding of the soluble transcription factor fragment requires dimerization with another bHLH protein. Interacts with LMNA. In terms of processing, processed in the Golgi apparatus, releasing the protein from the membrane. At low cholesterol the SCAP-SREBP complex is recruited into COPII vesicles for export from the endoplasmic reticulum. In the Golgi, complex SREBPs are cleaved sequentially by site-1 (MBTPS1, S1P) and site-2 (MBTPS2, S2P) proteases. The first cleavage by site-1 protease occurs within the luminal loop, the second cleavage by site-2 protease occurs within the first transmembrane domain, releasing the transcription factor from the Golgi membrane. Apoptosis triggers cleavage by the cysteine proteases caspase-3 and caspase-7. Cleavage and activation is induced by mediated cholesterol efflux. Post-translationally, phosphorylated by AMPK, leading to suppress protein processing and nuclear translocation, and repress target gene expression. SCAP-free SREBF2 is ubiquitinated by the BCR(ARMC5) complex, leading to its degradation. In terms of processing, ubiquitinated; the nuclear form has a rapid turnover and is rapidly ubiquitinated and degraded by the proteasome in the nucleus.

It localises to the endoplasmic reticulum membrane. The protein localises to the golgi apparatus membrane. The protein resides in the cytoplasmic vesicle. It is found in the COPII-coated vesicle membrane. Its subcellular location is the nucleus. With respect to regulation, activation by cleavage is down-regulated upon activation of SIRT3-dependent PRKAA1/AMPK-alpha signaling cascade which leads to inhibition of ATP-consuming lipogenesis to restore cellular energy balance. Its function is as follows. Precursor of the transcription factor form (Processed sterol regulatory element-binding protein 2), which is embedded in the endoplasmic reticulum membrane. Low sterol concentrations promote processing of this form, releasing the transcription factor form that translocates into the nucleus and activates transcription of genes involved in cholesterol biosynthesis. Functionally, key transcription factor that regulates expression of genes involved in cholesterol biosynthesis. Binds to the sterol regulatory element 1 (SRE-1) (5'-ATCACCCCAC-3'). Has dual sequence specificity binding to both an E-box motif (5'-ATCACGTGA-3') and to SRE-1 (5'-ATCACCCCAC-3'). Regulates transcription of genes related to cholesterol synthesis pathway. In Mus musculus (Mouse), this protein is Sterol regulatory element-binding protein 2.